The following is a 423-amino-acid chain: MTDLLSRAHAVALDAADPLRGLRDAFVFPQHGDDDQTYFVGNSLGLQPRAARAMVDEVLDRWGALAVEGHFTGPTQWLTYHQLVRDGLARVVGAQPGEVVAMNTLSVNLHLMMASFYRPTAERGAILIEAGAFPSDRHAVESQLRLHGLDPATHLIEVDADEPNGTVSMTAIAEAIAQHGPRLALVLWPGIQYRTGQAFDLAEIVRLARAQGAAVGFDLAHAVGNLPLTLHDDGVDFAVWCHYKYLNAGPGAVGGCFVHARHANSDLPRMAGWWGHEQQTRFRMDPQFVPSPGAEGWQLSNPPVLALAPLRASLALFDQAGMAALRAKSEQLTGHLEQLIHARVPQALQIVTPAEPARRGCQLSLRVAGGRARGRALFEHLHAAGVLGDWREPDVIRIAPVPLYNRFSDLHTFVEQVEAWAAA.

Residues L105, S106, 133-136, D218, H221, and Y243 each bind pyridoxal 5'-phosphate; that span reads FPSD. An N6-(pyridoxal phosphate)lysine modification is found at K244. Pyridoxal 5'-phosphate is bound by residues W273 and N301.

Belongs to the kynureninase family. As to quaternary structure, homodimer. It depends on pyridoxal 5'-phosphate as a cofactor.

It carries out the reaction L-kynurenine + H2O = anthranilate + L-alanine + H(+). The enzyme catalyses 3-hydroxy-L-kynurenine + H2O = 3-hydroxyanthranilate + L-alanine + H(+). Its pathway is amino-acid degradation; L-kynurenine degradation; L-alanine and anthranilate from L-kynurenine: step 1/1. The protein operates within cofactor biosynthesis; NAD(+) biosynthesis; quinolinate from L-kynurenine: step 2/3. Catalyzes the cleavage of L-kynurenine (L-Kyn) and L-3-hydroxykynurenine (L-3OHKyn) into anthranilic acid (AA) and 3-hydroxyanthranilic acid (3-OHAA), respectively. The chain is Kynureninase from Xanthomonas euvesicatoria pv. vesicatoria (strain 85-10) (Xanthomonas campestris pv. vesicatoria).